The sequence spans 40 residues: Photosystem II reaction center protein J (40 aa).

Residues 8-28 (IPLWLIGTVAGIPVIGLVGVF) form a helical membrane-spanning segment.

Belongs to the PsbJ family. PSII is composed of 1 copy each of membrane proteins PsbA, PsbB, PsbC, PsbD, PsbE, PsbF, PsbH, PsbI, PsbJ, PsbK, PsbL, PsbM, PsbT, PsbX, PsbY, PsbZ, Psb30/Ycf12, at least 3 peripheral proteins of the oxygen-evolving complex and a large number of cofactors. It forms dimeric complexes.

It localises to the plastid. It is found in the chloroplast thylakoid membrane. Its function is as follows. One of the components of the core complex of photosystem II (PSII). PSII is a light-driven water:plastoquinone oxidoreductase that uses light energy to abstract electrons from H(2)O, generating O(2) and a proton gradient subsequently used for ATP formation. It consists of a core antenna complex that captures photons, and an electron transfer chain that converts photonic excitation into a charge separation. The protein is Photosystem II reaction center protein J of Hordeum jubatum (Foxtail barley).